Here is a 170-residue protein sequence, read N- to C-terminus: Myosin regulatory light chain 1 (170 aa).

Basic residues predominate over residues 1–13 (MSKAAKKKSSKKR). Residues 1-22 (MSKAAKKKSSKKRSGSEAAQFD) form a disordered region. 2 consecutive EF-hand domains span residues 24-59 (KTIQ…MGQI) and 93-128 (DPEA…KRGE). 4 residues coordinate Ca(2+): Asp37, Asn39, Asp41, and Asp48.

Myosin is a hexamer of 2 heavy chains and 4 light chains (two regulatory light chains and two essential light chains).

This chain is Myosin regulatory light chain 1 (mlc-1), found in Caenorhabditis elegans.